The primary structure comprises 358 residues: tRNA-specific 2-thiouridylase MnmA (358 aa).

ATP contacts are provided by residues 6–13 (AMSGGVDS) and leucine 32. The active-site Nucleophile is cysteine 101. Cysteine 101 and cysteine 193 are joined by a disulfide. Glycine 125 provides a ligand contact to ATP. An interaction with tRNA region spans residues 143 to 145 (KDQ). Catalysis depends on cysteine 193, which acts as the Cysteine persulfide intermediate.

This sequence belongs to the MnmA/TRMU family.

The protein resides in the cytoplasm. It catalyses the reaction S-sulfanyl-L-cysteinyl-[protein] + uridine(34) in tRNA + AH2 + ATP = 2-thiouridine(34) in tRNA + L-cysteinyl-[protein] + A + AMP + diphosphate + H(+). In terms of biological role, catalyzes the 2-thiolation of uridine at the wobble position (U34) of tRNA, leading to the formation of s(2)U34. The chain is tRNA-specific 2-thiouridylase MnmA from Mycobacterium avium (strain 104).